Reading from the N-terminus, the 444-residue chain is Biotin carboxylase 2 (444 aa).

A Biotin carboxylation domain is found at 1-444 (MFTKVLIANR…VTTDFLKQHL (444 aa)). ATP is bound by residues K116, K158, 164 to 165 (GG), 200 to 203 (EKVI), H208, and H235. Positions 120–317 (RKAMEAAGVP…LVEQQLRIAA (198 aa)) constitute an ATP-grasp domain. K237 is a binding site for hydrogencarbonate. Residues E275 and E288 each contribute to the ATP site. Mg(2+)-binding residues include E275, E288, and N290. Residues E275, E288, and N290 each coordinate Mn(2+). Hydrogencarbonate contacts are provided by R292, V295, and R338. R292 is a catalytic residue. R338 is a binding site for biotin.

As to quaternary structure, acetyl-CoA carboxylase is a heterohexamer of biotin carboxyl carrier protein, biotin carboxylase and the two subunits of carboxyl transferase in a 2:2 complex. Requires Mg(2+) as cofactor. Mn(2+) is required as a cofactor.

The catalysed reaction is N(6)-biotinyl-L-lysyl-[protein] + hydrogencarbonate + ATP = N(6)-carboxybiotinyl-L-lysyl-[protein] + ADP + phosphate + H(+). The protein operates within lipid metabolism; malonyl-CoA biosynthesis; malonyl-CoA from acetyl-CoA: step 1/1. In terms of biological role, this protein is a component of the acetyl coenzyme A carboxylase complex; first, biotin carboxylase catalyzes the carboxylation of the carrier protein and then the transcarboxylase transfers the carboxyl group to form malonyl-CoA. This is Biotin carboxylase 2 (accC2) from Bacillus subtilis (strain 168).